The following is an 81-amino-acid chain: ATP synthase subunit c (81 aa).

Transmembrane regions (helical) follow at residues 5–25 (IAAG…IGAG) and 57–77 (VGLV…FVFA).

This sequence belongs to the ATPase C chain family. As to quaternary structure, F-type ATPases have 2 components, F(1) - the catalytic core - and F(0) - the membrane proton channel. F(1) has five subunits: alpha(3), beta(3), gamma(1), delta(1), epsilon(1). F(0) has three main subunits: a(1), b(2) and c(10-14). The alpha and beta chains form an alternating ring which encloses part of the gamma chain. F(1) is attached to F(0) by a central stalk formed by the gamma and epsilon chains, while a peripheral stalk is formed by the delta and b chains.

It localises to the cell membrane. Its function is as follows. F(1)F(0) ATP synthase produces ATP from ADP in the presence of a proton or sodium gradient. F-type ATPases consist of two structural domains, F(1) containing the extramembraneous catalytic core and F(0) containing the membrane proton channel, linked together by a central stalk and a peripheral stalk. During catalysis, ATP synthesis in the catalytic domain of F(1) is coupled via a rotary mechanism of the central stalk subunits to proton translocation. Key component of the F(0) channel; it plays a direct role in translocation across the membrane. A homomeric c-ring of between 10-14 subunits forms the central stalk rotor element with the F(1) delta and epsilon subunits. In Mycolicibacterium gilvum (strain PYR-GCK) (Mycobacterium gilvum (strain PYR-GCK)), this protein is ATP synthase subunit c.